The primary structure comprises 55 residues: Spermatid nuclear transition protein 1 (55 aa).

Over residues 1 to 42 the composition is skewed to basic residues; the sequence is MSTSRKLKTHGMRRGKNRAPHKGVKRGGSKRKYRKSSLKSRK. The interval 1-55 is disordered; sequence MSTSRKLKTHGMRRGKNRAPHKGVKRGGSKRKYRKSSLKSRKRGDDASRNYRSHL. Phosphoserine is present on residues Ser36, Ser37, and Ser40.

The protein belongs to the nuclear transition protein 1 family. Testis.

Its subcellular location is the nucleus. It localises to the chromosome. Its function is as follows. Plays a key role in the replacement of histones to protamine in the elongating spermatids of mammals. In condensing spermatids, loaded onto the nucleosomes, where it promotes the recruitment and processing of protamines, which are responsible for histone eviction. The sequence is that of Spermatid nuclear transition protein 1 (Tnp1) from Rattus norvegicus (Rat).